Here is a 1992-residue protein sequence, read N- to C-terminus: E3 ubiquitin-protein ligase TRIP12 (1992 aa).

The segment covering 1–10 (MSNRPNNNPG) has biased composition (polar residues). 3 disordered regions span residues 1–398 (MSNR…DDSE), 797–817 (QRKPNPLANSNTSGYSESKKD), and 938–1080 (SLLT…ASKD). S2 carries the post-translational modification N-acetylserine. S12 is modified (phosphoserine). The segment covering 18–27 (RNTAGAQPQD) has biased composition (polar residues). Residues 48–70 (DPDRANTSERQKTGQVPKKDNSR) show a composition bias toward basic and acidic residues. A phosphoserine mark is found at S77, S85, and S100. Residues 78–88 (PDYNRTNSPSS) are compositionally biased toward polar residues. Positions 119 to 132 (EQQLKSAQSPSTSK) are enriched in polar residues. Composition is skewed to low complexity over residues 154–166 (SSCVKSGSGSEST) and 175–216 (PTKL…SSTV). K181 carries the post-translational modification N6-acetyllysine. Residues 280 to 290 (PGSSKSETSKP) are compositionally biased toward polar residues. 2 positions are modified to phosphoserine: S310 and S312. Positions 326–338 (QKTTGSCASTSRR) are enriched in polar residues. Residues 346–358 (GAAEARRQEKMAD) are compositionally biased toward basic and acidic residues. Polar residues-rich tracts occupy residues 360–371 (ESNQEAVNSSAA) and 803–812 (LANSNTSGYS). Positions 749 to 836 (MLKKGNAQNT…DPELAKSFIK (88 aa)) constitute a WWE domain. The residue at position 942 (S942) is a Phosphoserine. Low complexity predominate over residues 948 to 973 (TNGSGSMGSTTSVSSGTATAATHAAA). Phosphoserine is present on residues S991 and S997. Over residues 1001–1014 (KRKRLPKRGPRRPK) the composition is skewed to basic residues. Residue S1016 is modified to Phosphoserine. Basic and acidic residues predominate over residues 1017 to 1026 (PPRDDDKVDN). Positions 1029 to 1040 (KSPTTTQSPKSS) are enriched in low complexity. S1030 carries the post-translational modification Phosphoserine. Positions 1041-1062 (FLASLNPKTWGRLSTQSNSNNI) are enriched in polar residues. S1317, S1322, S1329, and S1376 each carry phosphoserine. T1377 is modified (phosphothreonine). 2 disordered regions span residues 1407-1433 (SNKDCVGGKRGRAQTAPTKTSPRNAKK) and 1568-1587 (TNPEINQSDSQDSRVAPRLD). K1425 carries the N6-acetyllysine modification. Residue S1427 is modified to Phosphoserine. The tract at residues 1496–1570 (EIIPTSEFIN…AMQRLLDTNP (75 aa)) is K-box. Residues 1885–1992 (PDHGYTHDSR…REGQQSFHLS (108 aa)) form the HECT domain. C1959 serves as the catalytic Glycyl thioester intermediate.

This sequence belongs to the UPL family. K-HECT subfamily. In terms of assembly, interacts with MYC; leading to disrupt interaction with isoform p19ARF/ARF of CDKN2A. Interacts with TRADD; leading to disrupt interaction with isoform p19ARF/ARF of CDKN2A. Interacts with SMARCC1; leading to disrupt interaction with SMARCE1.

It localises to the nucleus. The protein resides in the nucleoplasm. The enzyme catalyses S-ubiquitinyl-[E2 ubiquitin-conjugating enzyme]-L-cysteine + [acceptor protein]-L-lysine = [E2 ubiquitin-conjugating enzyme]-L-cysteine + N(6)-ubiquitinyl-[acceptor protein]-L-lysine.. The protein operates within protein modification; protein ubiquitination. Its function is as follows. E3 ubiquitin-protein ligase involved in ubiquitin fusion degradation (UFD) pathway and regulation of DNA repair. Part of the ubiquitin fusion degradation (UFD) pathway, a process that mediates ubiquitination of protein at their N-terminus, regardless of the presence of lysine residues in target proteins. Acts as a key regulator of DNA damage response by acting as a suppressor of RNF168, an E3 ubiquitin-protein ligase that promotes accumulation of 'Lys-63'-linked histone H2A and H2AX at DNA damage sites, thereby acting as a guard against excessive spreading of ubiquitinated chromatin at damaged chromosomes. In normal cells, mediates ubiquitination and degradation of isoform p19ARF/ARF of CDKN2A, a lysine-less tumor suppressor required for p53/TP53 activation under oncogenic stress. In cancer cells, however, isoform p19ARF/ARF and TRIP12 are located in different cell compartments, preventing isoform p19ARF/ARF ubiquitination and degradation. Does not mediate ubiquitination of isoform p16-INK4a of CDKN2A. Also catalyzes ubiquitination of NAE1 and SMARCE1, leading to their degradation. Ubiquitination and degradation of target proteins is regulated by interaction with proteins such as MYC, TRADD or SMARCC1, which disrupt the interaction between TRIP12 and target proteins. Mediates ubiquitination of ASXL1: following binding to N(6)-methyladenosine methylated DNA, ASXL1 is ubiquitinated by TRIP12, leading to its degradation and subsequent inactivation of the PR-DUB complex. The protein is E3 ubiquitin-protein ligase TRIP12 (TRIP12) of Homo sapiens (Human).